A 260-amino-acid polypeptide reads, in one-letter code: Transcription repressor OFP13 (260 aa).

Residues 150–211 (VAMESEDPYG…VSAFVDLLSG (62 aa)) form the OVATE domain.

As to expression, expressed in roots, rosette and cauline leaves, shoots, stems, flower buds and siliques.

It localises to the nucleus. Its function is as follows. Transcriptional repressor that regulates multiple aspects of plant growth and development through the regulation of BEL1-LIKE (BLH) and KNOX TALE (KNAT) homeodomain transcription factors. This chain is Transcription repressor OFP13 (OFP13), found in Arabidopsis thaliana (Mouse-ear cress).